We begin with the raw amino-acid sequence, 520 residues long: Sensory neuron membrane protein 1 (520 aa).

The Cytoplasmic segment spans residues 1–5; that stretch reads MKPKK. A helical transmembrane segment spans residues 6-26; that stretch reads LGIIGGSLLAFGILICAIAFP. Residues 27–451 lie on the Extracellular side of the membrane; that stretch reads PFLRSQVKKQ…KLKTVFKTIS (425 aa). N-linked (GlcNAc...) asparagine glycosylation is found at Asn-64, Asn-224, and Asn-268. 3 cysteine pairs are disulfide-bonded: Cys-264-Cys-329, Cys-293-Cys-348, and Cys-331-Cys-337. The helical transmembrane segment at 452–472 threads the bilayer; the sequence is IVGFMKWFTIVSGTCVSGAAA. Topologically, residues 473–520 are cytoplasmic; it reads ALFFKNKDKNKLDITKVTPQKGEEKKWPNQMTISTIQSAAVPPNLDAD.

It belongs to the CD36 family.

Its subcellular location is the cell membrane. Its function is as follows. Plays an olfactory role that is not restricted to pheromone sensitivity. The sequence is that of Sensory neuron membrane protein 1 from Apis mellifera (Honeybee).